The chain runs to 437 residues: Histidinol dehydrogenase (437 aa).

NAD(+)-binding residues include Tyr133, Gln191, and Asn214. Substrate is bound by residues Ser240, Gln262, and His265. Residues Gln262 and His265 each contribute to the Zn(2+) site. Active-site proton acceptor residues include Glu329 and His330. The substrate site is built by His330, Asp363, Glu417, and His422. A Zn(2+)-binding site is contributed by Asp363. His422 contacts Zn(2+).

The protein belongs to the histidinol dehydrogenase family. Homodimer. Zn(2+) is required as a cofactor.

It catalyses the reaction L-histidinol + 2 NAD(+) + H2O = L-histidine + 2 NADH + 3 H(+). It participates in amino-acid biosynthesis; L-histidine biosynthesis; L-histidine from 5-phospho-alpha-D-ribose 1-diphosphate: step 9/9. Its function is as follows. Catalyzes the sequential NAD-dependent oxidations of L-histidinol to L-histidinaldehyde and then to L-histidine. This Blochmanniella floridana protein is Histidinol dehydrogenase.